Here is a 275-residue protein sequence, read N- to C-terminus: NH(3)-dependent NAD(+) synthetase (275 aa).

46–53 (GISGGQDS) serves as a coordination point for ATP. Residue Asp-52 coordinates Mg(2+). Arg-140 contributes to the deamido-NAD(+) binding site. Thr-160 contacts ATP. A Mg(2+)-binding site is contributed by Glu-165. Positions 173 and 180 each coordinate deamido-NAD(+). Lys-189 and Thr-211 together coordinate ATP. 260–261 (HK) contacts deamido-NAD(+).

The protein belongs to the NAD synthetase family. As to quaternary structure, homodimer.

The enzyme catalyses deamido-NAD(+) + NH4(+) + ATP = AMP + diphosphate + NAD(+) + H(+). Its pathway is cofactor biosynthesis; NAD(+) biosynthesis; NAD(+) from deamido-NAD(+) (ammonia route): step 1/1. Catalyzes the ATP-dependent amidation of deamido-NAD to form NAD. Uses ammonia as a nitrogen source. The protein is NH(3)-dependent NAD(+) synthetase of Enterobacter sp. (strain 638).